A 122-amino-acid polypeptide reads, in one-letter code: MIQQESRLKVADNSGAREVLTIKVLGGSGRKTANIGDVIVCTVKNATPGGVVKKGEVVKAVIVRTKSGVRRNDGSYIKFDENACVIIRDDKGPRGTRIFGPVARELREGNFMKIVSLAPEVL.

The protein belongs to the universal ribosomal protein uL14 family. Part of the 50S ribosomal subunit. Forms a cluster with proteins L3 and L19. In the 70S ribosome, L14 and L19 interact and together make contacts with the 16S rRNA in bridges B5 and B8.

Its function is as follows. Binds to 23S rRNA. Forms part of two intersubunit bridges in the 70S ribosome. The chain is Large ribosomal subunit protein uL14 from Macrococcus caseolyticus (strain JCSC5402) (Macrococcoides caseolyticum).